Reading from the N-terminus, the 492-residue chain is MKKAILSVSNKTGIVEFAKALTQLNYELYSTGGTKRILDEANVPVRSVSDLTHFPEIMDGRVKTLHPAVHGGILADRNKPQHLNELSEQHIDLIDMVVVNLYPFQQTVANPDVTMDEAIENIDIGGPTMLRAAAKNYKHVTTIVHPADYQEVLTRLRNDSLDESYRQSLMIKVFEHTAEYDEAIVRFFKGDKETLRYGENPQQSAYFVRTSNAKHTIAGAKQLHGKQLSYNNIKDADATLALVKKFDTPATVAVKHMNPCGVGIGDTIEQAFQHAYEADSQSIFGGIVALNRAVTPELAEQLHSIFLEVIIAPKFTDEALDILKQKKNVRLLEIDMTIDSNEEEFVSVSGGYLVQDKDNYVVPKEEMKVVTEVAPTDEQWEAMLLGWKVVPSVKSNAIILSNNKQTVGIGAGQMNRVGAAKIALERAIEINDHVALVSDGFFPMGDTVELAAQHGIKAIIQPGGSIKDQDSIDMANKHGIAMVVTGTRHFKH.

The MGS-like domain occupies methionine 1–valine 144.

The protein belongs to the PurH family.

The enzyme catalyses (6R)-10-formyltetrahydrofolate + 5-amino-1-(5-phospho-beta-D-ribosyl)imidazole-4-carboxamide = 5-formamido-1-(5-phospho-D-ribosyl)imidazole-4-carboxamide + (6S)-5,6,7,8-tetrahydrofolate. The catalysed reaction is IMP + H2O = 5-formamido-1-(5-phospho-D-ribosyl)imidazole-4-carboxamide. It participates in purine metabolism; IMP biosynthesis via de novo pathway; 5-formamido-1-(5-phospho-D-ribosyl)imidazole-4-carboxamide from 5-amino-1-(5-phospho-D-ribosyl)imidazole-4-carboxamide (10-formyl THF route): step 1/1. The protein operates within purine metabolism; IMP biosynthesis via de novo pathway; IMP from 5-formamido-1-(5-phospho-D-ribosyl)imidazole-4-carboxamide: step 1/1. This chain is Bifunctional purine biosynthesis protein PurH, found in Staphylococcus aureus (strain MSSA476).